The sequence spans 454 residues: Protein phosphatase 1F (454 aa).

The segment covering 1–12 has biased composition (polar residues); it reads MSSGAPQKSSPM. Residues 1 to 28 form a disordered region; it reads MSSGAPQKSSPMASGAEETPGFLDTLLQ. The 258-residue stretch at 156–413 folds into the PPM-type phosphatase domain; sequence LVSIHAIRNT…DNITVMVVFL (258 aa). Mn(2+) contacts are provided by aspartate 198, glycine 199, aspartate 360, and aspartate 404. Residues 419 to 454 are disordered; that stretch reads LLEGGNQGEGDPQAEGRRQDLPSSLPEPETQAPPRS. Serine 454 carries the phosphoserine modification.

This sequence belongs to the PP2C family. Associates with FEM1B. Mg(2+) serves as cofactor. Requires Mn(2+) as cofactor.

It catalyses the reaction O-phospho-L-seryl-[protein] + H2O = L-seryl-[protein] + phosphate. The enzyme catalyses O-phospho-L-threonyl-[protein] + H2O = L-threonyl-[protein] + phosphate. Dephosphorylates and concomitantly deactivates CaM-kinase II activated upon autophosphorylation, and CaM-kinases IV and I activated upon phosphorylation by CaM-kinase kinase. Promotes apoptosis. This is Protein phosphatase 1F (PPM1F) from Homo sapiens (Human).